Reading from the N-terminus, the 307-residue chain is MATH domain and coiled-coil domain-containing protein At3g58380 (307 aa).

An MATH domain is found at 6–132 (DKKFVWVIKD…CREITIVIEV (127 aa)). A coiled-coil region spans residues 238 to 290 (KVDWLEKKLKEVKEKKKNVDNGKARLQQIEEDLQKLNQKRLDLKDILDKEKAN).

This is MATH domain and coiled-coil domain-containing protein At3g58380 from Arabidopsis thaliana (Mouse-ear cress).